We begin with the raw amino-acid sequence, 457 residues long: Bifunctional protein GlmU (457 aa).

The tract at residues 1–229 (MSNSAKSVVI…LSEMEGVNNR (229 aa)) is pyrophosphorylase. UDP-N-acetyl-alpha-D-glucosamine-binding positions include 11–14 (LAAG), Lys-25, Gln-76, 81–82 (GT), 103–105 (YGD), Gly-140, Glu-154, Asn-169, and Asn-227. Asp-105 contacts Mg(2+). Asn-227 provides a ligand contact to Mg(2+). Residues 230–250 (LQLSALERIYQSEQAEQLLLA) are linker. The segment at 251-457 (GVMLLDPARF…GWKRPVKEKK (207 aa)) is N-acetyltransferase. Arg-333 and Lys-351 together coordinate UDP-N-acetyl-alpha-D-glucosamine. The active-site Proton acceptor is His-363. Tyr-366 and Asn-377 together coordinate UDP-N-acetyl-alpha-D-glucosamine. Acetyl-CoA contacts are provided by residues Ala-380, 386–387 (NY), Ser-405, Ala-423, and Arg-440.

This sequence in the N-terminal section; belongs to the N-acetylglucosamine-1-phosphate uridyltransferase family. It in the C-terminal section; belongs to the transferase hexapeptide repeat family. In terms of assembly, homotrimer. Mg(2+) serves as cofactor.

The protein resides in the cytoplasm. It catalyses the reaction alpha-D-glucosamine 1-phosphate + acetyl-CoA = N-acetyl-alpha-D-glucosamine 1-phosphate + CoA + H(+). The enzyme catalyses N-acetyl-alpha-D-glucosamine 1-phosphate + UTP + H(+) = UDP-N-acetyl-alpha-D-glucosamine + diphosphate. It participates in nucleotide-sugar biosynthesis; UDP-N-acetyl-alpha-D-glucosamine biosynthesis; N-acetyl-alpha-D-glucosamine 1-phosphate from alpha-D-glucosamine 6-phosphate (route II): step 2/2. Its pathway is nucleotide-sugar biosynthesis; UDP-N-acetyl-alpha-D-glucosamine biosynthesis; UDP-N-acetyl-alpha-D-glucosamine from N-acetyl-alpha-D-glucosamine 1-phosphate: step 1/1. It functions in the pathway bacterial outer membrane biogenesis; LPS lipid A biosynthesis. Catalyzes the last two sequential reactions in the de novo biosynthetic pathway for UDP-N-acetylglucosamine (UDP-GlcNAc). The C-terminal domain catalyzes the transfer of acetyl group from acetyl coenzyme A to glucosamine-1-phosphate (GlcN-1-P) to produce N-acetylglucosamine-1-phosphate (GlcNAc-1-P), which is converted into UDP-GlcNAc by the transfer of uridine 5-monophosphate (from uridine 5-triphosphate), a reaction catalyzed by the N-terminal domain. In Photorhabdus laumondii subsp. laumondii (strain DSM 15139 / CIP 105565 / TT01) (Photorhabdus luminescens subsp. laumondii), this protein is Bifunctional protein GlmU.